A 59-amino-acid chain; its full sequence is Large ribosomal subunit protein uL30 (59 aa).

Belongs to the universal ribosomal protein uL30 family. In terms of assembly, part of the 50S ribosomal subunit.

In Sulfurihydrogenibium sp. (strain YO3AOP1), this protein is Large ribosomal subunit protein uL30.